A 426-amino-acid chain; its full sequence is MKLQKPKGTQDILPGDAAKWQYVESVARDTFSQYNYGEIRTPMFEHYEVISRSVGDTTDIVTKEMYDFYDKGDRHITLRPEGTAPVVRSYVENKLFAPEVQKPVKLYYIGSMFRYERPQAGRLREFHQIGVECFGAANPATDVETIAMAYHLFEKLGIKDVTLHLNSLGSPESRAAYRQALIDYLTPMRDQLSKDSQRRLDENPLRVLDSKEKEDKLAVEKAPSILDYLDEESQAHFEAVKDMLEALDIPYVIDTNMVRGLDYYNHTIFEFITSVEGSDLTICAGGRYDSLVGYFGGPETPGFGFGLGLERLLMIIEKQGITLPIETEMDVYLAVLGDGANSKALELVQAIRRQGFTAERDYLGRKIKAQFKSADTFKAKLVMTLGESEVEAGKAVIKNNRSRQELEVSFEDMMTNFENISEQLLS.

The protein belongs to the class-II aminoacyl-tRNA synthetase family. As to quaternary structure, homodimer.

The protein resides in the cytoplasm. The catalysed reaction is tRNA(His) + L-histidine + ATP = L-histidyl-tRNA(His) + AMP + diphosphate + H(+). The polypeptide is Histidine--tRNA ligase (Streptococcus pyogenes serotype M5 (strain Manfredo)).